We begin with the raw amino-acid sequence, 333 residues long: Large ribosomal subunit protein mL44 (333 aa).

The N-terminal 30 residues, 1–30 (MASAVFRLLQQGPRRLLAPAVPTLAPPVRG), are a transit peptide targeting the mitochondrion. Residues 86–228 (DLLKTAFINS…LITQMTGKEL (143 aa)) enclose the RNase III domain. In terms of domain architecture, DRBM spans 236–306 (NPMGLLVEEL…ARVALRKLYG (71 aa)). The segment covering 311–327 (RRPWDYSKPKESPKRAE) has biased composition (basic and acidic residues). A disordered region spans residues 311 to 333 (RRPWDYSKPKESPKRAEQTSVAS).

This sequence belongs to the ribonuclease III family. Mitochondrion-specific ribosomal protein mL44 subfamily. In terms of assembly, component of the mitochondrial ribosome large subunit (39S) which comprises a 16S rRNA and about 50 distinct proteins.

It localises to the mitochondrion. Component of the 39S subunit of mitochondrial ribosome. May have a function in the assembly/stability of nascent mitochondrial polypeptides exiting the ribosome. The protein is Large ribosomal subunit protein mL44 (Mrpl44) of Mus musculus (Mouse).